Here is a 113-residue protein sequence, read N- to C-terminus: UPF0060 membrane protein Mmcs_2513 (113 aa).

Helical transmembrane passes span 12-32 (ALFV…WQGV), 37-57 (GWIW…VAAF), 66-86 (ILAA…VVVD), and 92-112 (RWDL…MYAP).

Belongs to the UPF0060 family.

Its subcellular location is the cell membrane. The sequence is that of UPF0060 membrane protein Mmcs_2513 from Mycobacterium sp. (strain MCS).